We begin with the raw amino-acid sequence, 75 residues long: Protein Tlp homolog (75 aa).

Positions 52 to 75 (RREALDGMREEIKDEARDKKNGYM) are disordered.

It belongs to the Tlp family.

This is Protein Tlp homolog from Clostridium botulinum (strain Okra / Type B1).